Here is a 232-residue protein sequence, read N- to C-terminus: Phosphatidylserine decarboxylase proenzyme (232 aa).

Residue Ser-190 is the Schiff-base intermediate with substrate; via pyruvic acid of the active site. Ser-190 carries the post-translational modification Pyruvic acid (Ser); by autocatalysis.

Belongs to the phosphatidylserine decarboxylase family. PSD-A subfamily. As to quaternary structure, heterodimer of a large membrane-associated beta subunit and a small pyruvoyl-containing alpha subunit. Pyruvate is required as a cofactor. Post-translationally, is synthesized initially as an inactive proenzyme. Formation of the active enzyme involves a self-maturation process in which the active site pyruvoyl group is generated from an internal serine residue via an autocatalytic post-translational modification. Two non-identical subunits are generated from the proenzyme in this reaction, and the pyruvate is formed at the N-terminus of the alpha chain, which is derived from the carboxyl end of the proenzyme. The post-translation cleavage follows an unusual pathway, termed non-hydrolytic serinolysis, in which the side chain hydroxyl group of the serine supplies its oxygen atom to form the C-terminus of the beta chain, while the remainder of the serine residue undergoes an oxidative deamination to produce ammonia and the pyruvoyl prosthetic group on the alpha chain.

Its subcellular location is the cell membrane. It catalyses the reaction a 1,2-diacyl-sn-glycero-3-phospho-L-serine + H(+) = a 1,2-diacyl-sn-glycero-3-phosphoethanolamine + CO2. The protein operates within phospholipid metabolism; phosphatidylethanolamine biosynthesis; phosphatidylethanolamine from CDP-diacylglycerol: step 2/2. Functionally, catalyzes the formation of phosphatidylethanolamine (PtdEtn) from phosphatidylserine (PtdSer). The chain is Phosphatidylserine decarboxylase proenzyme from Rhodopseudomonas palustris (strain BisB5).